The sequence spans 883 residues: Phosphoenolpyruvate carboxylase (883 aa).

Residues His-138 and Lys-546 contribute to the active site.

Belongs to the PEPCase type 1 family. Requires Mg(2+) as cofactor.

The catalysed reaction is oxaloacetate + phosphate = phosphoenolpyruvate + hydrogencarbonate. Forms oxaloacetate, a four-carbon dicarboxylic acid source for the tricarboxylic acid cycle. The polypeptide is Phosphoenolpyruvate carboxylase (Klebsiella pneumoniae (strain 342)).